Consider the following 231-residue polypeptide: Putative cobalt transport protein CbiM 2 (231 aa).

6 helical membrane-spanning segments follow: residues 8–28 (LPIGWCIFWAVLSAPFVIYGI), 41–61 (VLPLMAVCGAFVFVLSALKIP), 75–95 (LSAAFFGPFITSVLGTIVLLF), 108–128 (LGANVFSMAIAGPFIAWLVFV), 136–156 (VGIGVAVFITAAVANLVTYTV), and 176–196 (IAFAGIFAVTQIPLAIIEGII).

It belongs to the CbiM family. As to quaternary structure, forms an energy-coupling factor (ECF) transporter complex composed of an ATP-binding protein (A component, CbiO), a transmembrane protein (T component, CbiQ) and 2 possible substrate-capture proteins (S components, CbiM and CbiN) of unknown stoichimetry.

It localises to the cell membrane. It functions in the pathway cofactor biosynthesis; adenosylcobalamin biosynthesis. Functionally, part of the energy-coupling factor (ECF) transporter complex CbiMNOQ involved in cobalt import. In Methanocorpusculum labreanum (strain ATCC 43576 / DSM 4855 / Z), this protein is Putative cobalt transport protein CbiM 2.